The following is a 139-amino-acid chain: Metallothiol transferase FosB (139 aa).

In terms of domain architecture, VOC spans 4 to 119 (GINHITYSVS…DGHKLELHTG (116 aa)). Mg(2+) is bound by residues histidine 7, histidine 66, and glutamate 115. The Proton donor/acceptor role is filled by glutamate 115.

The protein belongs to the fosfomycin resistance protein family. FosB subfamily. Homodimer. Requires Mg(2+) as cofactor.

The protein localises to the cytoplasm. Functionally, metallothiol transferase which confers resistance to fosfomycin by catalyzing the addition of a thiol cofactor to fosfomycin. L-cysteine is probably the physiological thiol donor. This is Metallothiol transferase FosB from Staphylococcus haemolyticus.